The primary structure comprises 82 residues: Small ribosomal subunit protein uS17 (82 aa).

This sequence belongs to the universal ribosomal protein uS17 family. Part of the 30S ribosomal subunit.

One of the primary rRNA binding proteins, it binds specifically to the 5'-end of 16S ribosomal RNA. This Shewanella sp. (strain MR-7) protein is Small ribosomal subunit protein uS17.